A 602-amino-acid polypeptide reads, in one-letter code: MEGTGLLTAVLVFLFAAVVAVPIAQRLGIGAVLGYLIAGIAIGPWGLGFIRDVDEILHFSELGVVFLMFIIGLELNPAKLWQLRRSIFGVGAGQVVITAAVLGALLYFTQFAWQAAVIGGVGLAMSSTAMALQLMREKGMNRNEGGQLGFSVLLFQDMAVIPALALIPILAGNEGGANDWVKIGLKIAAFAGMLIGGRYLLRPLFRYIVASGVREVFTAAALLVVLGSALFMDALGLSMALGTFIAGILLAESEFQHELEIAIEPFKGLLLGLFFISVGMALDLGVLFTHLLDVLLGVLALVFIKSAILYGLARVFGLRRSVRLQFAGVLSQGGEFAFVLFSAAFSQRVLNAEQLALLLVVVTLSMMTTPLLMQVIDRILVRRYNAQEESDEKPFVEDNDPQVIIVGFGRFGQVIGRLLMANKMRITVLERDVSAVSMMRKYGYKVYYGDATELELLRAAGAEKAKAIVITCNEPEDTMALVHLCQQHFPNLHILARARGRVEAHELLQNGVKDFTRETFSSALELGRKTLLELGMHPHQAYRAQQHFRRLDMRMLRELMPQHHGDVAQISRIKEARRELEDIFQREMLHESRQLDGWDEYE.

13 consecutive transmembrane segments (helical) span residues 4–24 (TGLL…VPIA), 29–49 (IGAV…GLGF), 55–75 (EILH…GLEL), 87–107 (IFGV…ALLY), 115–135 (AAVI…LQLM), 152–172 (VLLF…ILAG), 181–201 (VKIG…RYLL), 207–227 (YIVA…VVLG), 230–250 (LFMD…GILL), 261–281 (IAIE…VGMA), 296–318 (LGVL…VFGL), 326–346 (FAGV…AAFS), and 356–376 (ALLL…MQVI). The RCK N-terminal domain occupies 400–519 (DPQVIIVGFG…NGVKDFTRET (120 aa)).

The protein belongs to the monovalent cation:proton antiporter 2 (CPA2) transporter (TC 2.A.37) family. KefB subfamily. Interacts with the regulatory subunit KefG.

The protein resides in the cell inner membrane. Pore-forming subunit of a potassium efflux system that confers protection against electrophiles. Catalyzes K(+)/H(+) antiport. This chain is Glutathione-regulated potassium-efflux system protein KefB, found in Yersinia pestis bv. Antiqua (strain Antiqua).